Consider the following 226-residue polypeptide: Transcriptional activator plp-1 (226 aa).

It belongs to the PUR DNA-binding protein family.

The protein localises to the nucleus. The protein resides in the chromosome. Probable transcription activator. Binds telomeric DNA containing repeats of the sequence, 5'-TTAGGC-3'. Binds to end-1 promoter, activating end-1 expression, which is required for endoderm specification during embryonic development. The protein is Transcriptional activator plp-1 of Caenorhabditis elegans.